Consider the following 334-residue polypeptide: N-chimaerin (334 aa).

Polar residues predominate over residues 1-10; the sequence is MPSKESWSGR. Positions 1–22 are disordered; the sequence is MPSKESWSGRKTNRATVHKSKQ. Threonine 67 is modified (phosphothreonine). The Phorbol-ester/DAG-type zinc-finger motif lies at 80–130; that stretch reads VHNFKVHTFRGPHWCEYCANFMWGLIAQGVKCADCGLNVHKQCSKMVPNDC. The region spanning 143 to 334 is the Rho-GAP domain; sequence CDLTTLVKAR…LLIKNEDILF (192 aa). Residue threonine 215 is modified to Phosphothreonine.

Interacts with EPHA4; effector of EPHA4 in axon guidance linking EPHA4 activation to RAC1 regulation. Post-translationally, phosphorylated. Phosphorylation is EPHA4 kinase activity-dependent.

Its function is as follows. GTPase-activating protein for p21-rac and a phorbol ester receptor. Involved in the assembly of neuronal locomotor circuits as a direct effector of EPHA4 in axon guidance. This chain is N-chimaerin (CHN1), found in Bos taurus (Bovine).